The chain runs to 240 residues: Probable phosphatase Pcar_2586 (240 aa).

Residues histidine 12, histidine 14, histidine 20, histidine 45, glutamate 78, histidine 105, histidine 136, aspartate 197, and histidine 199 each coordinate Zn(2+).

The protein belongs to the PHP family. Requires Zn(2+) as cofactor.

The chain is Probable phosphatase Pcar_2586 from Syntrophotalea carbinolica (strain DSM 2380 / NBRC 103641 / GraBd1) (Pelobacter carbinolicus).